The chain runs to 58 residues: Leucine zipper protein 6 (58 aa).

As to expression, widely expressed, highest levels found in brain, placenta, spleen, testis, and ovary. Up-regulated in some tumor cells.

The protein is Leucine zipper protein 6 (LUZP6) of Homo sapiens (Human).